A 416-amino-acid polypeptide reads, in one-letter code: Serine hydroxymethyltransferase (416 aa).

Residues Leu-118 and 122 to 124 (GHL) contribute to the (6S)-5,6,7,8-tetrahydrofolate site. Position 226 is an N6-(pyridoxal phosphate)lysine (Lys-226). 350–352 (SPF) lines the (6S)-5,6,7,8-tetrahydrofolate pocket.

It belongs to the SHMT family. In terms of assembly, homodimer. Pyridoxal 5'-phosphate serves as cofactor.

The protein resides in the cytoplasm. The enzyme catalyses (6R)-5,10-methylene-5,6,7,8-tetrahydrofolate + glycine + H2O = (6S)-5,6,7,8-tetrahydrofolate + L-serine. Its pathway is one-carbon metabolism; tetrahydrofolate interconversion. The protein operates within amino-acid biosynthesis; glycine biosynthesis; glycine from L-serine: step 1/1. Catalyzes the reversible interconversion of serine and glycine with tetrahydrofolate (THF) serving as the one-carbon carrier. This reaction serves as the major source of one-carbon groups required for the biosynthesis of purines, thymidylate, methionine, and other important biomolecules. Also exhibits THF-independent aldolase activity toward beta-hydroxyamino acids, producing glycine and aldehydes, via a retro-aldol mechanism. The chain is Serine hydroxymethyltransferase from Sulfurovum sp. (strain NBC37-1).